A 249-amino-acid chain; its full sequence is MAEISAKQVKELRETTGAGMMDCKKALQENQGDMTKAIEWLRQKGITSAEKKSGRQTAEGLVESYIHTGGRIGVLVEVNCETDFVARREEFKELVRNVAMQIAACPNVEYIQGSDIPEAVVAKEKEIEMGRDDLGNKPDNIKEKIVQGRIEKRIKELCLLDQPYIRDQNVTVEELIKQTIAQLGENIQVRRFTRFVLGEGIEKQEVDFAREVAEQAGQLAPEAESTTETADATSETTTEKSSAKKKKKK.

Residues 82-85 (TDFV) form an involved in Mg(2+) ion dislocation from EF-Tu region. The disordered stretch occupies residues 215–249 (QAGQLAPEAESTTETADATSETTTEKSSAKKKKKK). Over residues 222–236 (EAESTTETADATSET) the composition is skewed to low complexity.

The protein belongs to the EF-Ts family.

The protein localises to the cytoplasm. In terms of biological role, associates with the EF-Tu.GDP complex and induces the exchange of GDP to GTP. It remains bound to the aminoacyl-tRNA.EF-Tu.GTP complex up to the GTP hydrolysis stage on the ribosome. This is Elongation factor Ts from Rippkaea orientalis (strain PCC 8801 / RF-1) (Cyanothece sp. (strain PCC 8801)).